We begin with the raw amino-acid sequence, 585 residues long: MRYSHTLQQFSILSFFVTIWTVQSVPPQPPIRCDQTGCTVSNAYGTWPDRKTCHAANVTYPTTEEDLRKAVAYAAEHNLKVKTVTKFSHTIPKLACPSGSDALLISTSKYNSVIEIEPELLTVTADSGVSLRELIEKVEGAGFSIGTSPYWEGVSIGGLISTGSHGSSWSGRGGSVHDHVVGISLVVPANQSEGFAKVVRLEEGRDDTLLNAVKVSLGVLGVISKVKLSIEKAFKRSVTYNFTSDVALEDIFMEHGKKYEFGDITWYPSRKTAVYRYDIRAPVNVSGNGVNDFLGFQSNPILISKGVRALEKGFESSKNENGKCTTADTTLAYKKLIGNGLKNSGLIFTGYPVIGRQGKIQTSGSCLYSSSIRIDVACAWDPRYNGLFFYETTAIFPVSRFRDFLLDVKKLRDMKPERLCGIDIYNGIFIRFIKGSKAYLGQTEDSVVIDFNYYRADDELTPRLNQDVMEEMEQMAFVKHGAKPHWGKNRKVGFFGVKQKIGPNFDKFLEVKNKLDPKKMFSSEWSDEILLGTEASKYDGCALEGNCVCSEERHCNPSKGYFCKEGLVYTQARVCRFSPAQVIVM.

The N-terminal stretch at 1–24 (MRYSHTLQQFSILSFFVTIWTVQS) is a signal peptide. In terms of domain architecture, FAD-binding PCMH-type spans 51–233 (KTCHAANVTY…SKVKLSIEKA (183 aa)).

Belongs to the oxygen-dependent FAD-linked oxidoreductase family. It depends on FAD as a cofactor.

The protein localises to the vacuole. It carries out the reaction L-gulono-1,4-lactone + O2 = L-ascorbate + H2O2 + H(+). The protein operates within cofactor biosynthesis; L-ascorbate biosynthesis. Functionally, catalyzes the oxidation of L-gulono-1,4-lactone to ascorbic acid. L-gulono-1,4-lactone is oxidized to hydrogen peroxide and L-xylo-hexulonolactone which spontaneously isomerizes to L-ascorbate. In Arabidopsis thaliana (Mouse-ear cress), this protein is L-gulonolactone oxidase 3.